The primary structure comprises 1047 residues: FACT complex subunit SPT16 (1047 aa).

Ala-2 is modified (N-acetylalanine). Lys-139 is subject to N6-acetyllysine. At Ser-188 the chain carries Phosphoserine. Lys-196 and Lys-223 each carry N6-acetyllysine. Ser-455 bears the Phosphoserine mark. A coiled-coil region spans residues 465 to 507; sequence RNEMTAEEKRRAHQKELAAQLNEEAKRRLTEQKGEQQIQKARK. The segment at 491–518 is disordered; the sequence is RRLTEQKGEQQIQKARKSNVSYKNPSLM. A Glycyl lysine isopeptide (Lys-Gly) (interchain with G-Cter in SUMO2) cross-link involves residue Lys-497. Residues 499-514 show a composition bias toward polar residues; that stretch reads EQQIQKARKSNVSYKN. Position 508 is a phosphoserine (Ser-508). Residue Lys-513 is modified to N6-acetyllysine; alternate. Residue Lys-513 forms a Glycyl lysine isopeptide (Lys-Gly) (interchain with G-Cter in SUMO2); alternate linkage. Lys-647 is covalently cross-linked (Glycyl lysine isopeptide (Lys-Gly) (interchain with G-Cter in SUMO2)). Ser-650 and Ser-658 each carry phosphoserine. N6-acetyllysine occurs at positions 732 and 786. Thr-903 is subject to Phosphothreonine. Lys-904 carries the post-translational modification N6-acetyllysine. Positions 918–1047 are disordered; sequence EQGGWSFLEP…SSAPPKKKRK (130 aa). The span at 927–973 shows a compositional bias: acidic residues; that stretch reads PEGEGSDAEDGDSESEIEDETFNPSEDDYEEEEEDSDEDYSSEAEES. Phosphoserine occurs at positions 979, 982, 986, and 1015. Positions 985 to 1005 are enriched in basic and acidic residues; sequence ESGKDWDELEEEARKADRESR. Residues 1024–1039 show a composition bias toward low complexity; the sequence is VHSSGRGSNRGSRHSS.

It belongs to the peptidase M24 family. SPT16 subfamily. As to quaternary structure, interacts with MYOG (via C-terminal region). Component of the FACT complex, a stable heterodimer of SSRP1 and SUPT16H. Also a component of a CK2-SPT16-SSRP1 complex which forms following UV irradiation, composed of SSRP1, SUPT16H, CSNK2A1, CSNK2A2 and CSNK2B. Interacts with NEK9. Binds to histone H2A-H2B. Identified in a centromere complex containing histones H2A, H2B and H4, and at least CENPA, CENPB, CENPC, CENPT, CENPN, HJURP, SUPT16H, SSRP1 and RSF1. Interacts with GTF2E2. In terms of processing, ADP-ribosylated. ADP-ribosylation by PARP1 is induced by genotoxic stress and correlates with dissociation of FACT from chromatin. As to expression, widely expressed. Expressed in brain, liver, heart, kidneys, lungs, spleen, thymus, ovary, and testes, with highest levels of expression observed in thymus.

It localises to the nucleus. The protein localises to the chromosome. Its function is as follows. Component of the FACT complex, a general chromatin factor that acts to reorganize nucleosomes. The FACT complex is involved in multiple processes that require DNA as a template such as mRNA elongation, DNA replication and DNA repair. During transcription elongation the FACT complex acts as a histone chaperone that both destabilizes and restores nucleosomal structure. It facilitates the passage of RNA polymerase II and transcription by promoting the dissociation of one histone H2A-H2B dimer from the nucleosome, then subsequently promotes the reestablishment of the nucleosome following the passage of RNA polymerase II. The FACT complex is probably also involved in phosphorylation of 'Ser-392' of p53/TP53 via its association with CK2 (casein kinase II). This chain is FACT complex subunit SPT16 (Supt16h), found in Mus musculus (Mouse).